Consider the following 267-residue polypeptide: Pyridoxine/pyridoxamine 5'-phosphate oxidase (267 aa).

Substrate-binding positions include 20-23 and Lys-80; that span reads RQGY. Residues 75-80, 90-91, Arg-96, Lys-97, and Gln-119 contribute to the FMN site; these read RTVLLK and YT. 3 residues coordinate substrate: Tyr-137, Arg-141, and Ser-145. FMN-binding positions include 154–155 and Trp-200; that span reads QS. Residue 206 to 208 participates in substrate binding; it reads RLH. Residue Arg-210 coordinates FMN.

This sequence belongs to the pyridoxamine 5'-phosphate oxidase family. In terms of assembly, homodimer. Requires FMN as cofactor.

It catalyses the reaction pyridoxamine 5'-phosphate + O2 + H2O = pyridoxal 5'-phosphate + H2O2 + NH4(+). The enzyme catalyses pyridoxine 5'-phosphate + O2 = pyridoxal 5'-phosphate + H2O2. It functions in the pathway cofactor metabolism; pyridoxal 5'-phosphate salvage; pyridoxal 5'-phosphate from pyridoxamine 5'-phosphate: step 1/1. The protein operates within cofactor metabolism; pyridoxal 5'-phosphate salvage; pyridoxal 5'-phosphate from pyridoxine 5'-phosphate: step 1/1. Its function is as follows. Catalyzes the oxidation of either pyridoxine 5'-phosphate (PNP) or pyridoxamine 5'-phosphate (PMP) into pyridoxal 5'-phosphate (PLP). The protein is Pyridoxine/pyridoxamine 5'-phosphate oxidase of Frankia casuarinae (strain DSM 45818 / CECT 9043 / HFP020203 / CcI3).